Here is a 309-residue protein sequence, read N- to C-terminus: 2-dehydropantoate 2-reductase (309 aa).

Residues 7–12 (GAGSIG), Arg-31, and Lys-74 each bind NADP(+). Residues 8–10 (AGS), Arg-31, Lys-74, and Cys-84 contribute to the CoA site. NADP(+) contacts are provided by Asn-100 and Ala-124. The active-site Proton donor is Lys-180. Residues Lys-180, Asn-184, Asn-188, Asn-198, and 247–250 (NYNS) contribute to the substrate site. Residue Arg-257 coordinates CoA. Glu-262 contacts NADP(+).

The protein belongs to the ketopantoate reductase family. In terms of assembly, homodimer.

The protein resides in the cytoplasm. It catalyses the reaction (R)-pantoate + NAD(+) = 2-dehydropantoate + NADH + H(+). The enzyme catalyses (R)-pantoate + NADP(+) = 2-dehydropantoate + NADPH + H(+). It functions in the pathway cofactor biosynthesis; coenzyme A biosynthesis. Regulated by feedback inhibition by coenzyme A (CoA). CoA acts by competing with NAD(P)H. A disulfide bond is formed between CoA and Cys-84, which indicates an irreversible inhibition upon binding of CoA. Functionally, catalyzes the NAD(P)H-dependent reduction of ketopantoate into pantoic acid. Prefers NADH rather than NADPH as the electron donor. This is 2-dehydropantoate 2-reductase from Thermococcus kodakarensis (strain ATCC BAA-918 / JCM 12380 / KOD1) (Pyrococcus kodakaraensis (strain KOD1)).